Reading from the N-terminus, the 630-residue chain is Probable potassium transport system protein Kup (630 aa).

A run of 12 helical transmembrane segments spans residues 17–37, 51–71, 105–125, 144–164, 175–195, 218–238, 255–275, 283–303, 344–364, 374–394, 402–422, and 428–448; these read LAIA…LYSL, PSAI…VVGI, ITGL…GDAV, PQLS…LFWI, LFGP…IYHI, VLLA…AEAL, YVLV…LLLL, PFFL…STVA, IYVP…VIGF, YGIA…VVMV, LLVA…FGAN, and QGGW…MTWY.

The protein belongs to the HAK/KUP transporter (TC 2.A.72) family.

The protein resides in the cell inner membrane. The enzyme catalyses K(+)(in) + H(+)(in) = K(+)(out) + H(+)(out). Its function is as follows. Transport of potassium into the cell. Likely operates as a K(+):H(+) symporter. The chain is Probable potassium transport system protein Kup from Burkholderia pseudomallei (strain 1710b).